The chain runs to 234 residues: Sugar fermentation stimulation protein homolog (234 aa).

It belongs to the SfsA family.

The protein is Sugar fermentation stimulation protein homolog of Shewanella frigidimarina (strain NCIMB 400).